The primary structure comprises 482 residues: Bifunctional protein GlmU (482 aa).

The interval 1–241 (MTASTEAAVV…SALVTGVNDR (241 aa)) is pyrophosphorylase. Residues 12–15 (LAAG), lysine 26, glutamine 83, 88–89 (GT), 112–114 (SGD), glycine 151, glutamate 166, asparagine 181, and asparagine 239 each bind UDP-N-acetyl-alpha-D-glucosamine. Position 114 (aspartate 114) interacts with Mg(2+). Residue asparagine 239 participates in Mg(2+) binding. A linker region spans residues 242 to 262 (VQLSDLGKVLNRRIVAAHQRA). The tract at residues 263-482 (GVTIIDPGST…AARKALGDES (220 aa)) is N-acetyltransferase. 2 residues coordinate UDP-N-acetyl-alpha-D-glucosamine: arginine 344 and lysine 362. The active-site Proton acceptor is histidine 374. The UDP-N-acetyl-alpha-D-glucosamine site is built by tyrosine 377 and asparagine 388. Acetyl-CoA contacts are provided by residues alanine 391, 397 to 398 (NY), serine 416, and alanine 434. The interval 463-482 (KKRPGSAADKAARKALGDES) is disordered. Basic and acidic residues predominate over residues 472–482 (KAARKALGDES).

This sequence in the N-terminal section; belongs to the N-acetylglucosamine-1-phosphate uridyltransferase family. It in the C-terminal section; belongs to the transferase hexapeptide repeat family. Homotrimer. Mg(2+) serves as cofactor.

It is found in the cytoplasm. The enzyme catalyses alpha-D-glucosamine 1-phosphate + acetyl-CoA = N-acetyl-alpha-D-glucosamine 1-phosphate + CoA + H(+). The catalysed reaction is N-acetyl-alpha-D-glucosamine 1-phosphate + UTP + H(+) = UDP-N-acetyl-alpha-D-glucosamine + diphosphate. It functions in the pathway nucleotide-sugar biosynthesis; UDP-N-acetyl-alpha-D-glucosamine biosynthesis; N-acetyl-alpha-D-glucosamine 1-phosphate from alpha-D-glucosamine 6-phosphate (route II): step 2/2. Its pathway is nucleotide-sugar biosynthesis; UDP-N-acetyl-alpha-D-glucosamine biosynthesis; UDP-N-acetyl-alpha-D-glucosamine from N-acetyl-alpha-D-glucosamine 1-phosphate: step 1/1. The protein operates within bacterial outer membrane biogenesis; LPS lipid A biosynthesis. Functionally, catalyzes the last two sequential reactions in the de novo biosynthetic pathway for UDP-N-acetylglucosamine (UDP-GlcNAc). The C-terminal domain catalyzes the transfer of acetyl group from acetyl coenzyme A to glucosamine-1-phosphate (GlcN-1-P) to produce N-acetylglucosamine-1-phosphate (GlcNAc-1-P), which is converted into UDP-GlcNAc by the transfer of uridine 5-monophosphate (from uridine 5-triphosphate), a reaction catalyzed by the N-terminal domain. This is Bifunctional protein GlmU from Mycolicibacterium smegmatis (strain ATCC 700084 / mc(2)155) (Mycobacterium smegmatis).